Reading from the N-terminus, the 474-residue chain is tRNA-2-methylthio-N(6)-dimethylallyladenosine synthase (474 aa).

The MTTase N-terminal domain occupies 3–120 (KKLHIKTWGC…LPEMINHVQG (118 aa)). [4Fe-4S] cluster-binding residues include Cys12, Cys49, Cys83, Cys157, Cys161, and Cys164. Residues 143 to 375 (RAEGPTAFVS…QQRISQQAME (233 aa)) enclose the Radical SAM core domain. In terms of domain architecture, TRAM spans 378–441 (RKMVGTVQRV…ASSLRGILLR (64 aa)).

The protein belongs to the methylthiotransferase family. MiaB subfamily. As to quaternary structure, monomer. [4Fe-4S] cluster serves as cofactor.

The protein localises to the cytoplasm. The catalysed reaction is N(6)-dimethylallyladenosine(37) in tRNA + (sulfur carrier)-SH + AH2 + 2 S-adenosyl-L-methionine = 2-methylsulfanyl-N(6)-dimethylallyladenosine(37) in tRNA + (sulfur carrier)-H + 5'-deoxyadenosine + L-methionine + A + S-adenosyl-L-homocysteine + 2 H(+). Its function is as follows. Catalyzes the methylthiolation of N6-(dimethylallyl)adenosine (i(6)A), leading to the formation of 2-methylthio-N6-(dimethylallyl)adenosine (ms(2)i(6)A) at position 37 in tRNAs that read codons beginning with uridine. The chain is tRNA-2-methylthio-N(6)-dimethylallyladenosine synthase from Yersinia pseudotuberculosis serotype O:1b (strain IP 31758).